A 214-amino-acid polypeptide reads, in one-letter code: Clavatol biosynthesis cluster protein B (214 aa).

An N-terminal signal peptide occupies residues 1 to 17 (MAALSFQCLCVASAVRA). N-linked (GlcNAc...) asparagine glycosylation is found at asparagine 103 and asparagine 204.

The protein operates within secondary metabolite biosynthesis. Functionally, part of the cla gene cluster that produces clavatol and ortho-quinone methide. The clavatol biosynthesis cluster cla and the terrestric acid cluster tra are both involved in the production of peniphenones and penilactones. The non-reducing PKS claF is responsible for the formation of clavatol from successive condensations of 3 malonyl-CoA units, presumably with a simple acetyl-CoA starter unit, and 2 methylation steps. The esterase claE probably collaborates with claF by catalyzing the hydrolysis of ACP-bound acyl intermediates to free the ACP from stalled intermediates. The clavatol oxidase claD then converts clavatol to hydroxyclavatol. Spontaneous dehydration of hydroxyclavatol leads to the accumulation of the highly active ortho-quinone methide. On the other hand, the PKS-NRPS hybrid traA is involved in the formation of crustosic acid, with the help of traB and traD. The polyketide synthase module (PKS) of traA is responsible for the synthesis of the polyketide backbone via the condensation of an acetyl-CoA starter unit with 3 malonyl-CoA units. The downstream nonribosomal peptide synthetase (NRPS) module then amidates the carboxyl end of the polyketide with L-malic acid. Because traA lacks a designated enoylreductase (ER) domain, the required activity is provided the enoyl reductase traG. Crustosic acid undergoes decarboxylation and isomerization to the terrestric acid, catalyzed by the 2-oxoglutarate-dependent dioxygenase traH. Both acids are further converted to the 2 gamma-butyrolactones (R)-5-methyltetronic acid and (S)-5-carboxylmethyltetronic acid, with involvement of the cytochrome P450 monooxygenase claJ. Spontaneous addition of the methide to these gamma-butyrolactones leads to peniphenone D and penilactone D, which undergo again stereospecific attacking by methide to give penilactones A and B. The function of claB has not been investigated yet. In Penicillium crustosum (Blue mold fungus), this protein is Clavatol biosynthesis cluster protein B.